Here is a 448-residue protein sequence, read N- to C-terminus: Putative carbonic anhydrase 2 (448 aa).

Residues 1 to 222 enclose the Alpha-carbonic anhydrase domain; that stretch reads AYRQTENLLY…PAERDVFRII (222 aa). H19 provides a ligand contact to Zn(2+). N-linked (GlcNAc...) asparagine glycans are attached at residues N139 and N198. Residues 229–448 are disordered; that stretch reads RREEDDERGD…DKGDDKGDDN (220 aa). The segment covering 245-280 has biased composition (acidic residues); the sequence is DDDDNYDDDDYYNDDYSNDDYYDDDYYYDDYDDDTD. Basic and acidic residues-rich tracts occupy residues 281–334 and 342–354; these read DDHK…DDSG and RDGRGNGDSRDRN. N314 carries N-linked (GlcNAc...) asparagine glycosylation. Gly residues predominate over residues 357-368; sequence NGNGRENGGVRG. Positions 370–379 are enriched in basic and acidic residues; that stretch reads GNDRDGRRDN. Residue N385 is glycosylated (N-linked (GlcNAc...) asparagine). Positions 386–421 are enriched in basic and acidic residues; the sequence is GTRRGNGDDRGGRRNEDRGENRRGKDDQERESEDGR. Over residues 422-435 the composition is skewed to basic residues; the sequence is RRRRRFNGRRRRRG. The span at 436–448 shows a compositional bias: basic and acidic residues; that stretch reads RGDDKGDDKGDDN.

It belongs to the alpha-carbonic anhydrase family. Component of the acid-insoluble and acid-soluble organic matrix of calcified layers of the shell (at protein level).

It localises to the secreted. The enzyme catalyses hydrogencarbonate + H(+) = CO2 + H2O. Functionally, reversible hydration of carbon dioxide. This is Putative carbonic anhydrase 2 from Lottia gigantea (Giant owl limpet).